Here is a 265-residue protein sequence, read N- to C-terminus: Phosphonoacetaldehyde hydrolase (265 aa).

Catalysis depends on Asp9, which acts as the Nucleophile. Residues Asp9 and Ala11 each coordinate Mg(2+). Residue Lys50 is the Schiff-base intermediate with substrate of the active site. A Mg(2+)-binding site is contributed by Asp184.

It belongs to the HAD-like hydrolase superfamily. PhnX family. Homodimer. Mg(2+) is required as a cofactor.

The catalysed reaction is phosphonoacetaldehyde + H2O = acetaldehyde + phosphate + H(+). Functionally, involved in phosphonate degradation. This Lactiplantibacillus plantarum (strain ATCC BAA-793 / NCIMB 8826 / WCFS1) (Lactobacillus plantarum) protein is Phosphonoacetaldehyde hydrolase.